The chain runs to 199 residues: NAD(P)H dehydrogenase (quinone) (199 aa).

The region spanning 4–190 (VLVLYYSAYG…AGARYQGRVI (187 aa)) is the Flavodoxin-like domain. Residues 10–15 (SAYGHI) and 78–80 (TRF) each bind FMN. Position 12 (tyrosine 12) interacts with NAD(+). Residue tryptophan 98 coordinates substrate. FMN contacts are provided by residues 113–119 (STATQHG) and histidine 134.

It belongs to the WrbA family. It depends on FMN as a cofactor.

It catalyses the reaction a quinone + NADH + H(+) = a quinol + NAD(+). It carries out the reaction a quinone + NADPH + H(+) = a quinol + NADP(+). The chain is NAD(P)H dehydrogenase (quinone) from Bradyrhizobium sp. (strain ORS 278).